The chain runs to 297 residues: MLKKNNWLQNAVIAMLVLIVGLCINMGSGTKVQAESIQRPTPINQVFPDPGLANAVKQNLGKQSVTDLVSQKELSGVQNFNGDNSNIQSLAGMQFFTNLKELHLSHNQISDLSPLKDLTKLEELSVNRNRLKNLNGIPSACLSRLFLDNNELRDTDSLIHLKNLEILSIRNNKLKSIVMLGFLSKLEVLDLHGNEITNTGGLTRLKKVNWIDLTGQKCVNEPVKYQPELYITNTVKDPDGRWISPYYISNGGSYVDGCVLWELPVYTDEVSYKFSEYINVGETEAIFDGTVTQPIKN.

The signal sequence occupies residues 1–34 (MLKKNNWLQNAVIAMLVLIVGLCINMGSGTKVQA). LRR repeat units lie at residues 74 to 96 (LSGVQNFNGDNSNIQSLAGMQFF), 97 to 120 (TNLKELHLSHNQISDLSPLKDLTK), 122 to 139 (EELSVNRNRLKNLNGIPS), 140 to 161 (ACLSRLFLDNNELRDTDSLIHL), 162 to 184 (KNLEILSIRNNKLKSIVMLGFLS), and 186 to 207 (LEVLDLHGNEITNTGGLTRLKK).

Belongs to the internalin family. As to quaternary structure, interacts in vitro with human intestinal mucin-2 (MUC2) but not with mucin-1; binding is slightly better at pH 5.5, (the pH of the intestine) than at pH 7.4. Interacts with the SH3 6 domain of human DNMBP (Tuba). Interacts with I-kappa-B kinase alpha (IKKA, CHUK).

It is found in the secreted. The protein localises to the host cytoplasm. In terms of biological role, a virulence enhancer that has at least 2 dissociable functions in infection; it impairs translocation of host transcription factor NF-kappa-B to the nucleus and antagonizes the function of the Tuba dynamin-binding protein, promoting bacterial spreading. Perturbs the morphology of host cell junctions by impairing host DNMBP (Tuba) and WASL interaction, altering cortical tension at the cell junctions and allowing bacteria to more efficiently form bacteria-filled cell protrusions which promote bacterial spreading within infected host tissue. Down-regulates the host inflammation response usually induced by Listeria infection. Interacts with host I-kappa-B kinase alpha (IKKA, CHUK), which prevents IKKA from phosphorylating NF-kappa-B inhibitor alpha (IKBA, NFKBIA) and thus delays degradation of phospho-IKBA. Translocation of host transcription factor p65 (a subunit of NF-kappa-B, RELA) into the nucleus is impaired, which prevents activation of NF-KB-regulated genes. Recognized by serum from healthy humans exposed to L.monocytogenes as well from patients who have recovered from listeriosis. This is Internalin C from Listeria monocytogenes serotype 1/2a (strain EGD / Mackaness).